We begin with the raw amino-acid sequence, 417 residues long: UDP-N-acetylglucosamine 1-carboxyvinyltransferase (417 aa).

Residue 22-23 participates in phosphoenolpyruvate binding; it reads KN. Arginine 92 is a UDP-N-acetyl-alpha-D-glucosamine binding site. Cysteine 116 serves as the catalytic Proton donor. Position 116 is a 2-(S-cysteinyl)pyruvic acid O-phosphothioketal (cysteine 116). UDP-N-acetyl-alpha-D-glucosamine is bound by residues 121-125, aspartate 306, and isoleucine 328; that span reads RPIDL.

Belongs to the EPSP synthase family. MurA subfamily.

The protein localises to the cytoplasm. It carries out the reaction phosphoenolpyruvate + UDP-N-acetyl-alpha-D-glucosamine = UDP-N-acetyl-3-O-(1-carboxyvinyl)-alpha-D-glucosamine + phosphate. It participates in cell wall biogenesis; peptidoglycan biosynthesis. Its function is as follows. Cell wall formation. Adds enolpyruvyl to UDP-N-acetylglucosamine. The sequence is that of UDP-N-acetylglucosamine 1-carboxyvinyltransferase from Buchnera aphidicola subsp. Schizaphis graminum (strain Sg).